Reading from the N-terminus, the 569-residue chain is Sulfite reductase [NADPH] hemoprotein beta-component (569 aa).

Residues C433, C439, C478, and C482 each coordinate [4Fe-4S] cluster. A siroheme-binding site is contributed by C482.

It belongs to the nitrite and sulfite reductase 4Fe-4S domain family. Alpha(8)-beta(8). The alpha component is a flavoprotein, the beta component is a hemoprotein. It depends on siroheme as a cofactor. Requires [4Fe-4S] cluster as cofactor.

The enzyme catalyses hydrogen sulfide + 3 NADP(+) + 3 H2O = sulfite + 3 NADPH + 4 H(+). The protein operates within sulfur metabolism; hydrogen sulfide biosynthesis; hydrogen sulfide from sulfite (NADPH route): step 1/1. Component of the sulfite reductase complex that catalyzes the 6-electron reduction of sulfite to sulfide. This is one of several activities required for the biosynthesis of L-cysteine from sulfate. This Blochmanniella floridana protein is Sulfite reductase [NADPH] hemoprotein beta-component.